Reading from the N-terminus, the 315-residue chain is Neurogenic differentiation factor 4 (315 aa).

The tract at residues 39–71 (ERGSIDGEEDDEEEEDGEKPKKRGPKKKKMTKA) is disordered. Acidic residues predominate over residues 44 to 55 (DGEEDDEEEEDG). Positions 58–70 (PKKRGPKKKKMTK) are enriched in basic residues. The bHLH domain occupies 78-130 (VRRVKANARERSRMHGLNDALENLRRVMPCYSKTQKLSKIETLRLARNYIWAL). S89 is modified (phosphoserine).

In terms of assembly, efficient DNA binding requires dimerization with another bHLH protein. Forms a heterodimer with the bHLH protein hes2, and weakly interacts with hey1/hrt1. In terms of processing, serine or threonine phosphorylation within the basic region may regulate neurogenic activity. In terms of tissue distribution, first expressed weakly at stage 12 in primary neuronal precursors. At stages 18 and 21, strongly expressed in the cranial ganglions, with weaker expression remaining in the spinal cord. Later, strongly expressed at sites of neuronal differentiation, namely the eye, forebrain and cranial ganglions.

Its subcellular location is the nucleus. Functionally, probably acts as a transcriptional activator. Mediates neuronal differentiation. Required for the regulation of amacrine cell fate specification in the retina. This chain is Neurogenic differentiation factor 4 (neurod4), found in Xenopus laevis (African clawed frog).